The sequence spans 106 residues: ATP-dependent Clp protease adapter protein ClpS (106 aa).

The protein belongs to the ClpS family. As to quaternary structure, binds to the N-terminal domain of the chaperone ClpA.

In terms of biological role, involved in the modulation of the specificity of the ClpAP-mediated ATP-dependent protein degradation. This chain is ATP-dependent Clp protease adapter protein ClpS, found in Methylococcus capsulatus (strain ATCC 33009 / NCIMB 11132 / Bath).